We begin with the raw amino-acid sequence, 224 residues long: Cytidylate kinase (224 aa).

13 to 21 (GPSASGKGT) contacts ATP.

Belongs to the cytidylate kinase family. Type 1 subfamily.

It is found in the cytoplasm. The enzyme catalyses CMP + ATP = CDP + ADP. It catalyses the reaction dCMP + ATP = dCDP + ADP. The polypeptide is Cytidylate kinase (Nitrosomonas eutropha (strain DSM 101675 / C91 / Nm57)).